Consider the following 156-residue polypeptide: 6,7-dimethyl-8-ribityllumazine synthase (156 aa).

5-amino-6-(D-ribitylamino)uracil is bound by residues Phe-22, 57-59 (AYE), and 81-83 (TVI). Residue 86–87 (GT) participates in (2S)-2-hydroxy-3-oxobutyl phosphate binding. His-89 (proton donor) is an active-site residue. Phe-114 lines the 5-amino-6-(D-ribitylamino)uracil pocket. Residue Arg-128 coordinates (2S)-2-hydroxy-3-oxobutyl phosphate.

Belongs to the DMRL synthase family. As to quaternary structure, forms an icosahedral capsid composed of 60 subunits, arranged as a dodecamer of pentamers.

The enzyme catalyses (2S)-2-hydroxy-3-oxobutyl phosphate + 5-amino-6-(D-ribitylamino)uracil = 6,7-dimethyl-8-(1-D-ribityl)lumazine + phosphate + 2 H2O + H(+). It participates in cofactor biosynthesis; riboflavin biosynthesis; riboflavin from 2-hydroxy-3-oxobutyl phosphate and 5-amino-6-(D-ribitylamino)uracil: step 1/2. In terms of biological role, catalyzes the formation of 6,7-dimethyl-8-ribityllumazine by condensation of 5-amino-6-(D-ribitylamino)uracil with 3,4-dihydroxy-2-butanone 4-phosphate. This is the penultimate step in the biosynthesis of riboflavin. The polypeptide is 6,7-dimethyl-8-ribityllumazine synthase (Cronobacter sakazakii (strain ATCC BAA-894) (Enterobacter sakazakii)).